Reading from the N-terminus, the 247-residue chain is Chymase (247 aa).

An N-terminal signal peptide occupies residues 1–19 (MLLLPLPLLLFFLCSRAEA). Positions 20-21 (GE) are cleaved as a propeptide — activation peptide. Residues 22-245 (IIGGTECKPH…YRPWINKILQ (224 aa)) form the Peptidase S1 domain. An intrachain disulfide couples Cys51 to Cys67. The active-site Charge relay system is His66. N-linked (GlcNAc...) asparagine glycans are attached at residues Asn80 and Asn103. Asp110 acts as the Charge relay system in catalysis. Intrachain disulfides connect Cys144/Cys209 and Cys175/Cys188. Catalysis depends on Ser203, which acts as the Charge relay system.

It belongs to the peptidase S1 family. Granzyme subfamily.

It localises to the secreted. It is found in the cytoplasmic granule. It carries out the reaction Preferential cleavage: Phe-|-Xaa &gt; Tyr-|-Xaa &gt; Trp-|-Xaa &gt; Leu-|-Xaa.. Its function is as follows. Major secreted protease of mast cells with suspected roles in vasoactive peptide generation, extracellular matrix degradation, and regulation of gland secretion. The polypeptide is Chymase (CMA1) (Macaca fascicularis (Crab-eating macaque)).